Reading from the N-terminus, the 369-residue chain is Cytochrome P450 monooxygenase apf8 (369 aa).

Cys-303 is a binding site for heme.

This sequence belongs to the cytochrome P450 family. Heme is required as a cofactor.

Its pathway is secondary metabolite biosynthesis. Functionally, cytochrome P450 monooxygenase; part of the gene cluster that mediates the biosynthesis of the cyclic tetrapeptide apicidin F (APF). The non-ribosomal peptide synthetase apf1 incorporates four different amino acids to produce apicidin F: L-phenylalanine, D-pipecolic acid (D-pip), N-methoxy-L-tryptophan and L-2-aminooctanedioic acid. L-Phenylalanine is the only proteinogenic amino acid directly used by apf1. The 3 other apf1 substrates are non-proteinogenic and have to be modified by other enzymes of the cluster. Lysine is converted to delta-1-pyrroline-5-carboxylate (P5C) which is reduced to L-pipecolic acid (L-pip) by apf3. L-pip is epimerized to D-pip, probably by apf1 activity, prior to incorporation. L-Tryptophan is N-oxidyzed by one of the cytochrome P450 monooxygenases (apf7 or apf8), and further methylated at the hydroxy group by the O-methyltransferase apf6 to yield N-methoxy-L-tryptophan. The synthesis of the fourth apf1 substrate is more complex. The fatty acid synthase apf5 is involved in the synthesis of the octanoic acid backbone of L-2-aminooctanedioic acid by fixing one acetyl-CoA unit and three malonyl-CoA units. Then one of the cytochrome P450 monooxygenases (apf7 or apf8) may oxidize this backbone to 2-oxooctanoic acid. The aminotransferase apf4 is predicted to catalyze the exchange of the keto group with an amino group. The next step would be the oxidation of 2-aminooctanoic acid by one of the cytochrome P450 monooxygenases (apf7 or apf8). The last step is the oxidation of 2-amino-8-hydroxyoctanoic acid to 2-aminooctanedioic acid is catalyzed by the FAD-dependent monooxygenase apf9. The polypeptide is Cytochrome P450 monooxygenase apf8 (Gibberella fujikuroi (strain CBS 195.34 / IMI 58289 / NRRL A-6831) (Bakanae and foot rot disease fungus)).